We begin with the raw amino-acid sequence, 822 residues long: A disintegrin and metallopeptidase domain 3 (822 aa).

The first 16 residues, 1-16 (MLPLFLVLSYLGQVIA), serve as a signal peptide directing secretion. The 198-residue stretch at 187-384 (RILRIKIIMD…PELDCLRNTS (198 aa)) folds into the Peptidase M12B domain. 7 disulfide bridges follow: Cys-296-Cys-379, Cys-338-Cys-363, Cys-340-Cys-345, Cys-456-Cys-476, Cys-623-Cys-635, Cys-629-Cys-641, and Cys-643-Cys-652. The region spanning 395 to 484 (GSYCGNHLLE…GCAPDTKAAD (90 aa)) is the Disintegrin domain. The 35-residue stretch at 619–653 (GTRECEADDKCQGHGICNNLNNCQCESGFAPPECD) folds into the EGF-like domain. Residues 689 to 709 (VLLISFYILLPFLVVLAFMAV) traverse the membrane as a helical segment.

Interacts with LY6K. Interacts with TEX101. In terms of processing, initially synthesized as a 110-kDa precursor in round spermatids, and the precursor is then processed into a 42-kDa mature protein during the sperm transport into and/or once in the epididymis. Expressed in sperm (at protein level).

Its subcellular location is the cell membrane. Involved in fertilization by controlling sperm migration into the oviduct. Promotes the binding of sperm to the oocyte zona pellucida. This chain is A disintegrin and metallopeptidase domain 3, found in Mus musculus (Mouse).